The chain runs to 620 residues: 1-deoxy-D-xylulose-5-phosphate synthase (620 aa).

Thiamine diphosphate is bound by residues H75 and 116–118 (AHS). Mg(2+) is bound at residue D147. Residues 148–149 (GA), N177, Y284, and E366 contribute to the thiamine diphosphate site. A Mg(2+)-binding site is contributed by N177.

It belongs to the transketolase family. DXPS subfamily. As to quaternary structure, homodimer. The cofactor is Mg(2+). Thiamine diphosphate serves as cofactor.

The enzyme catalyses D-glyceraldehyde 3-phosphate + pyruvate + H(+) = 1-deoxy-D-xylulose 5-phosphate + CO2. Its pathway is metabolic intermediate biosynthesis; 1-deoxy-D-xylulose 5-phosphate biosynthesis; 1-deoxy-D-xylulose 5-phosphate from D-glyceraldehyde 3-phosphate and pyruvate: step 1/1. In terms of biological role, catalyzes the acyloin condensation reaction between C atoms 2 and 3 of pyruvate and glyceraldehyde 3-phosphate to yield 1-deoxy-D-xylulose-5-phosphate (DXP). This chain is 1-deoxy-D-xylulose-5-phosphate synthase, found in Bordetella pertussis (strain Tohama I / ATCC BAA-589 / NCTC 13251).